Here is a 91-residue protein sequence, read N- to C-terminus: Large ribosomal subunit protein eL43 (91 aa).

Residues 38–59 (CNFCGKDSLKRKAAGIWECKAC) form a C4-type zinc finger.

The protein belongs to the eukaryotic ribosomal protein eL43 family.

The polypeptide is Large ribosomal subunit protein eL43 (Schistosoma mansoni (Blood fluke)).